The sequence spans 490 residues: ATP synthase subunit beta (490 aa).

173-180 (GGAGVGKT) serves as a coordination point for ATP.

Belongs to the ATPase alpha/beta chains family. In terms of assembly, F-type ATPases have 2 components, CF(1) - the catalytic core - and CF(0) - the membrane proton channel. CF(1) has five subunits: alpha(3), beta(3), gamma(1), delta(1), epsilon(1). CF(0) has three main subunits: a(1), b(2) and c(9-12). The alpha and beta chains form an alternating ring which encloses part of the gamma chain. CF(1) is attached to CF(0) by a central stalk formed by the gamma and epsilon chains, while a peripheral stalk is formed by the delta and b chains.

The protein resides in the cell membrane. It carries out the reaction ATP + H2O + 4 H(+)(in) = ADP + phosphate + 5 H(+)(out). Its function is as follows. Produces ATP from ADP in the presence of a proton gradient across the membrane. The catalytic sites are hosted primarily by the beta subunits. The chain is ATP synthase subunit beta from Bifidobacterium longum subsp. infantis (strain ATCC 15697 / DSM 20088 / JCM 1222 / NCTC 11817 / S12).